A 72-amino-acid polypeptide reads, in one-letter code: Translation initiation factor IF-1 (72 aa).

In terms of domain architecture, S1-like spans methionine 1–lysine 72.

Belongs to the IF-1 family. In terms of assembly, component of the 30S ribosomal translation pre-initiation complex which assembles on the 30S ribosome in the order IF-2 and IF-3, IF-1 and N-formylmethionyl-tRNA(fMet); mRNA recruitment can occur at any time during PIC assembly.

It localises to the cytoplasm. In terms of biological role, one of the essential components for the initiation of protein synthesis. Stabilizes the binding of IF-2 and IF-3 on the 30S subunit to which N-formylmethionyl-tRNA(fMet) subsequently binds. Helps modulate mRNA selection, yielding the 30S pre-initiation complex (PIC). Upon addition of the 50S ribosomal subunit IF-1, IF-2 and IF-3 are released leaving the mature 70S translation initiation complex. In Xylella fastidiosa (strain 9a5c), this protein is Translation initiation factor IF-1.